The following is a 787-amino-acid chain: Penicillin-binding protein 1A (787 aa).

Over 1 to 6 the chain is Cytoplasmic; that stretch reads MYKSLF. The chain crosses the membrane as a helical; Signal-anchor for type II membrane protein span at residues 7–27; sequence LCLKIFAVLILIGCSVTAYII. Topologically, residues 28–787 are periplasmic; it reads YHYSHDLPDY…GMLDQSQEIY (760 aa). The tract at residues 49-220 is transglycosylase; it reads TRIYSRDGKL…SELNPDKNYS (172 aa). Glu87 functions as the Proton donor; for transglycosylase activity in the catalytic mechanism. Positions 398-711 are transpeptidase; sequence DVIVVEPIKD…SNVVLPIFID (314 aa). Ser457 functions as the Acyl-ester intermediate; for transpeptidase activity in the catalytic mechanism.

It in the N-terminal section; belongs to the glycosyltransferase 51 family. This sequence in the C-terminal section; belongs to the transpeptidase family.

It is found in the cell inner membrane. It catalyses the reaction [GlcNAc-(1-&gt;4)-Mur2Ac(oyl-L-Ala-gamma-D-Glu-L-Lys-D-Ala-D-Ala)](n)-di-trans,octa-cis-undecaprenyl diphosphate + beta-D-GlcNAc-(1-&gt;4)-Mur2Ac(oyl-L-Ala-gamma-D-Glu-L-Lys-D-Ala-D-Ala)-di-trans,octa-cis-undecaprenyl diphosphate = [GlcNAc-(1-&gt;4)-Mur2Ac(oyl-L-Ala-gamma-D-Glu-L-Lys-D-Ala-D-Ala)](n+1)-di-trans,octa-cis-undecaprenyl diphosphate + di-trans,octa-cis-undecaprenyl diphosphate + H(+). The catalysed reaction is Preferential cleavage: (Ac)2-L-Lys-D-Ala-|-D-Ala. Also transpeptidation of peptidyl-alanyl moieties that are N-acyl substituents of D-alanine.. The protein operates within cell wall biogenesis; peptidoglycan biosynthesis. Functionally, cell wall formation. Synthesis of cross-linked peptidoglycan from the lipid intermediates. The enzyme has a penicillin-insensitive transglycosylase N-terminal domain (formation of linear glycan strands) and a penicillin-sensitive transpeptidase C-terminal domain (cross-linking of the peptide subunits). This Rickettsia prowazekii (strain Madrid E) protein is Penicillin-binding protein 1A (mrcA).